The sequence spans 1115 residues: Tbc2 translation factor, chloroplastic (1115 aa).

Low complexity-rich tracts occupy residues 69 to 87 (TASVPSTSGASPSGSQLSS) and 163 to 175 (RRAGSGASTSGRA). Disordered regions lie at residues 69–90 (TASVPSTSGASPSGSQLSSKAL) and 163–210 (RRAG…SSSS). Positions 176 to 186 (RGWGSGPGRNG) are enriched in gly residues. Over residues 187–210 (SGSSSVSVNGSGSSSNGSSSSSSS) the composition is skewed to low complexity. Tandem repeats lie at residues 483 to 521 (LVLELSRARLTSFSPLQLAKAVQGLAALRYRPSPEWVEA), 607 to 645 (LDLTSRLLAAGGFSGGELQQLLEGLTRLALQPPLEWMQA), 685 to 723 (LAATQANMKQLLADTTCSAALLTALRRLNIEPPPGWVGA), 724 to 763 (LLEESRSALKNRCTDLHLANLAGSLAAWGVRPDGRWAARL), 764 to 803 (MWRSQVLMNEDRMSPRALVALLQAMVSLGLSPNPVWTQLC), 804 to 842 (LQAAVRRASQPAFEPHHYGTLMASLHALGIQPPQEWLTR), 843 to 880 (MLLSTYRCWDRFSVTHWSSLLPALVLLKARPPREWLRR), 990 to 1029 (PAAHAATSTTTATAVAHPQPQLLPQAQALPQPGPEWQAAW), and 1030 to 1068 (WAASTRLLLRVRYAPSELVLTAGWLGSLGLRPPPEWLQA). Residues 483–1068 (LVLELSRARL…LRPPPEWLQA (586 aa)) form a 9 X 38 AA approximate repeats region.

In terms of assembly, part of a 400 kDa complex which is not stably associated with RNA.

The protein resides in the plastid. The protein localises to the chloroplast stroma. In terms of biological role, required for expression of the chloroplast encoded psbC mRNA, most likely for translation initiation. Interacts with the 5'-UTR of psbC. This is Tbc2 translation factor, chloroplastic (TBC2) from Chlamydomonas reinhardtii (Chlamydomonas smithii).